A 478-amino-acid polypeptide reads, in one-letter code: Signal recognition particle receptor FtsY (478 aa).

Basic and acidic residues-rich tracts occupy residues 14–33 (KDKA…ERGN) and 45–56 (AEAHDAVDKDPV). The tract at residues 14-94 (KDKAETEERP…DAPLLPGAEL (81 aa)) is disordered. Acidic residues predominate over residues 71–86 (EAVDVAPAEDDEEEDA). GTP contacts are provided by residues 283 to 290 (GVNGTGKT), 365 to 369 (DTAGR), and 429 to 432 (TKLD).

It belongs to the GTP-binding SRP family. FtsY subfamily. In terms of assembly, part of the signal recognition particle protein translocation system, which is composed of SRP and FtsY. SRP is a ribonucleoprotein composed of Ffh and a 4.5S RNA molecule.

The protein localises to the cell inner membrane. It is found in the cytoplasm. It catalyses the reaction GTP + H2O = GDP + phosphate + H(+). Its function is as follows. Involved in targeting and insertion of nascent membrane proteins into the cytoplasmic membrane. Acts as a receptor for the complex formed by the signal recognition particle (SRP) and the ribosome-nascent chain (RNC). Interaction with SRP-RNC leads to the transfer of the RNC complex to the Sec translocase for insertion into the membrane, the hydrolysis of GTP by both Ffh and FtsY, and the dissociation of the SRP-FtsY complex into the individual components. The sequence is that of Signal recognition particle receptor FtsY from Agrobacterium fabrum (strain C58 / ATCC 33970) (Agrobacterium tumefaciens (strain C58)).